Consider the following 359-residue polypeptide: Halocin-H4 (359 aa).

Positions 1–46 (MSKDRDGRRTSRRGTLKKIGGFSLGALSFGAVGRTQAATGSSVTTA) are cleaved as a signal peptide. Disordered regions lie at residues 40–59 (GSSV…DPKS) and 340–359 (IPDR…SRKQ).

The protein localises to the secreted. In terms of biological role, has antibacterial activity against other haloarchaeons. Interacts with the membrane of the target cells where it causes permeability changes that result in an ionic imbalance leading to cell lysis and death. The sequence is that of Halocin-H4 (halH4) from Haloferax mediterranei (strain ATCC 33500 / DSM 1411 / JCM 8866 / NBRC 14739 / NCIMB 2177 / R-4) (Halobacterium mediterranei).